The sequence spans 241 residues: Uridylate kinase (241 aa).

14-17 contributes to the ATP binding site; it reads KLSG. The interval 22 to 27 is involved in allosteric activation by GTP; the sequence is GNQGFG. Glycine 56 is a binding site for UMP. The ATP site is built by glycine 57 and arginine 61. UMP is bound by residues aspartate 76 and 137–144; that span reads TGNPYFTT. ATP-binding residues include threonine 164, tyrosine 170, and aspartate 173.

The protein belongs to the UMP kinase family. Homohexamer.

It is found in the cytoplasm. The catalysed reaction is UMP + ATP = UDP + ADP. It participates in pyrimidine metabolism; CTP biosynthesis via de novo pathway; UDP from UMP (UMPK route): step 1/1. Allosterically activated by GTP. Inhibited by UTP. Functionally, catalyzes the reversible phosphorylation of UMP to UDP. The polypeptide is Uridylate kinase (Syntrophotalea carbinolica (strain DSM 2380 / NBRC 103641 / GraBd1) (Pelobacter carbinolicus)).